The chain runs to 453 residues: Homogentisate 1,2-dioxygenase (453 aa).

His-306 functions as the Proton acceptor in the catalytic mechanism. 2 residues coordinate Fe cation: His-349 and Glu-355. Homogentisate is bound by residues Tyr-364 and His-385. A Fe cation-binding site is contributed by His-385.

The protein belongs to the homogentisate dioxygenase family. In terms of assembly, hexamer; dimer of trimers. It depends on Fe cation as a cofactor.

The catalysed reaction is homogentisate + O2 = 4-maleylacetoacetate + H(+). It functions in the pathway amino-acid degradation; L-phenylalanine degradation; acetoacetate and fumarate from L-phenylalanine: step 4/6. In terms of biological role, involved in the catabolism of homogentisate (2,5-dihydroxyphenylacetate or 2,5-OH-PhAc), a central intermediate in the degradation of phenylalanine and tyrosine. Catalyzes the oxidative ring cleavage of the aromatic ring of homogentisate to yield maleylacetoacetate. In Rhizobium etli (strain CIAT 652), this protein is Homogentisate 1,2-dioxygenase.